The following is a 362-amino-acid chain: Phosphoserine aminotransferase (362 aa).

L-glutamate-binding residues include S9 and R42. Pyridoxal 5'-phosphate contacts are provided by residues 76–77 (GR), W102, T153, D174, and Q197. K198 carries the N6-(pyridoxal phosphate)lysine modification. 239-240 (NT) serves as a coordination point for pyridoxal 5'-phosphate.

It belongs to the class-V pyridoxal-phosphate-dependent aminotransferase family. SerC subfamily. Homodimer. It depends on pyridoxal 5'-phosphate as a cofactor.

It localises to the cytoplasm. It catalyses the reaction O-phospho-L-serine + 2-oxoglutarate = 3-phosphooxypyruvate + L-glutamate. The enzyme catalyses 4-(phosphooxy)-L-threonine + 2-oxoglutarate = (R)-3-hydroxy-2-oxo-4-phosphooxybutanoate + L-glutamate. It functions in the pathway amino-acid biosynthesis; L-serine biosynthesis; L-serine from 3-phospho-D-glycerate: step 2/3. The protein operates within cofactor biosynthesis; pyridoxine 5'-phosphate biosynthesis; pyridoxine 5'-phosphate from D-erythrose 4-phosphate: step 3/5. In terms of biological role, catalyzes the reversible conversion of 3-phosphohydroxypyruvate to phosphoserine and of 3-hydroxy-2-oxo-4-phosphonooxybutanoate to phosphohydroxythreonine. The sequence is that of Phosphoserine aminotransferase from Shigella dysenteriae serotype 1 (strain Sd197).